The sequence spans 191 residues: Negative modulator of initiation of replication (191 aa).

The segment at Ala-96–Val-97 is interaction with DNA.

Belongs to the SeqA family. As to quaternary structure, homodimer. Polymerizes to form helical filaments.

It localises to the cytoplasm. In terms of biological role, negative regulator of replication initiation, which contributes to regulation of DNA replication and ensures that replication initiation occurs exactly once per chromosome per cell cycle. Binds to pairs of hemimethylated GATC sequences in the oriC region, thus preventing assembly of replication proteins and re-initiation at newly replicated origins. Repression is relieved when the region becomes fully methylated. In Shewanella amazonensis (strain ATCC BAA-1098 / SB2B), this protein is Negative modulator of initiation of replication.